The sequence spans 90 residues: Mucin-like protein 1 (90 aa).

Positions 1 to 20 (MKFLAVLVLLGVSIFLVSAQ) are cleaved as a signal peptide. O-linked (GalNAc...) threonine glycans are attached at residues threonine 23, threonine 24, threonine 30, threonine 34, threonine 46, threonine 47, threonine 51, threonine 52, threonine 54, threonine 55, threonine 59, threonine 60, threonine 62, and threonine 63. Composition is skewed to low complexity over residues 25–36 (AAPADTYPATGP) and 44–68 (AETT…ASTT). The tract at residues 25 to 68 (AAPADTYPATGPADDEAPDAETTAAATTATTAAPTTATTAASTT) is disordered. Tandem repeats lie at residues 46–53 (TTAAATTA), 54–61 (TTAAPTTA), and 62–69 (TTAASTTA). The interval 46-69 (TTAAATTATTAAPTTATTAASTTA) is 3 X 8 AA tandem repeat of T-T-A-A-[APS]-T-T-A. O-linked (GalNAc...) serine glycosylation occurs at serine 66. O-linked (GalNAc...) threonine glycosylation is found at threonine 67 and threonine 68.

Post-translationally, O-glycosylated. As to expression, expressed in mammary, salivary glands and prostate. Also detected in lung. Mainly expressed in cancer cell lines of breast origin. Highly expressed in lymph node-positive compared with node-negative tumors. Detected in all lymph node containing metastatic cells.

The protein localises to the secreted. Its subcellular location is the membrane. May play a role as marker for the diagnosis of metastatic breast cancer. The protein is Mucin-like protein 1 (MUCL1) of Homo sapiens (Human).